Reading from the N-terminus, the 552-residue chain is MVSVQKVPAIVLCSGVSLALLHVLCLATCLNESPGQNSKDEKLCPENFTRILDSLLDGYDNRLRPGFGGPVTEVKTDIYVTSFGPVSDVEMEYTMDVFFRQTWIDKRLKYDGPIEILRLNNMMVTKVWTPDTFFRNGKKSVSHNMTAPNKLFRIMRNGTILYTMRLTISAECPMRLVDFPMDGHACPLKFGSYAYPKSEMIYTWTKGPEKSVEVPKESSSLVQYDLIGQTVSSETIKSITGEYIVMTVYFHLRRKMGYFMIQTYIPCIMTVILSQVSFWINKESVPARTVFGITTVLTMTTLSISARHSLPKVSYATAMDWFIAVCFAFVFSALIEFAAVNYFTNIQMQKAKKKISKPPPEVPAAPVLKEKHTETSLQNTHANLNMRKRTNALVHSESDVNSRTEVGNHSSKTTAAQESSETTPKAHLASSPNPFSRANAAETISAAARGLSSAASPSPHGTLQPAPLRSASARPAFGARLGRIKTTVNTTGVPGNVSATPPPSAPPPSGSGTSKIDKYARILFPVTFGAFNMVYWVVYLSKDTMEKSESLM.

The N-terminal stretch at 1-35 (MVSVQKVPAIVLCSGVSLALLHVLCLATCLNESPG) is a signal peptide. Topologically, residues 36-259 (QNSKDEKLCP…FHLRRKMGYF (224 aa)) are extracellular. Residue N47 is glycosylated (N-linked (GlcNAc...) asparagine). Residue R100 participates in 4-aminobutanoate binding. 2 N-linked (GlcNAc...) asparagine glycosylation sites follow: N144 and N157. Position 163 (T163) interacts with 4-aminobutanoate. A disulfide bridge connects residues C172 and C186. A helical membrane pass occupies residues 260-280 (MIQTYIPCIMTVILSQVSFWI). Over 281 to 284 (NKES) the chain is Cytoplasmic. Residues 285–305 (VPARTVFGITTVLTMTTLSIS) traverse the membrane as a helical segment. Residues 306–318 (ARHSLPKVSYATA) lie on the Extracellular side of the membrane. The helical transmembrane segment at 319-341 (MDWFIAVCFAFVFSALIEFAAVN) threads the bilayer. The Cytoplasmic segment spans residues 342–515 (YFTNIQMQKA…PPPSGSGTSK (174 aa)). 3 disordered regions span residues 353–436 (KKIS…NPFS), 448–470 (ARGL…PLRS), and 486–513 (TTVN…GSGT). Residues 403-423 (RTEVGNHSSKTTAAQESSETT) show a composition bias toward polar residues. Low complexity-rich tracts occupy residues 448–458 (ARGLSSAASPS) and 486–499 (TTVN…NVSA). Positions 500-509 (TPPPSAPPPS) are enriched in pro residues. A helical membrane pass occupies residues 516–538 (IDKYARILFPVTFGAFNMVYWVV). Topologically, residues 539 to 552 (YLSKDTMEKSESLM) are extracellular.

Belongs to the ligand-gated ion channel (TC 1.A.9) family. Gamma-aminobutyric acid receptor (TC 1.A.9.5) subfamily. GABRA4 sub-subfamily. As to quaternary structure, heteropentamer, formed by a combination of alpha (GABRA1-6), beta (GABRB1-3), gamma (GABRG1-3), delta (GABRD), epsilon (GABRE), rho (GABRR1-3), pi (GABRP) and theta (GABRQ) chains, each subunit exhibiting distinct physiological and pharmacological properties. Expressed in the brain.

The protein resides in the cell membrane. It localises to the postsynaptic cell membrane. With respect to regulation, potentiated by histamine. Its function is as follows. Alpha subunit of the heteropentameric ligand-gated chloride channel gated by gamma-aminobutyric acid (GABA), a major inhibitory neurotransmitter in the brain. GABA-gated chloride channels, also named GABA(A) receptors (GABAAR), consist of five subunits arranged around a central pore and contain GABA active binding site(s) located at the alpha and beta subunit interface(s). Alpha-4/GABRA4 subunit often assembles with delta or gamma-2 subunits, in combination with beta subunits. When activated by GABA, GABAARs selectively allow the flow of chloride anions across the cell membrane down their electrochemical gradient. GABAARs containing alpha-4 are predominantly extrasynaptic, contributing to tonic inhibition in dentate granule cells and thalamic relay neurons. Extrasynaptic alpha-4-containing GABAARs control levels of excitability and network activity. GABAAR containing alpha-4-beta-3-delta subunits can simultaneously bind GABA and histamine where histamine binds at the interface of two neighboring beta subunits, which may be involved in the regulation of sleep and wakefulness. In Rattus norvegicus (Rat), this protein is Gamma-aminobutyric acid receptor subunit alpha-4.